A 294-amino-acid chain; its full sequence is Cytidine deaminase (294 aa).

CMP/dCMP-type deaminase domains are found at residues 49–169 and 188–294; these read TPQQ…FGPA and ETQD…YIAL. 90–92 provides a ligand contact to substrate; the sequence is NLE. His-103 serves as a coordination point for Zn(2+). The active-site Proton donor is the Glu-105. The Zn(2+) site is built by Cys-130 and Cys-133.

Belongs to the cytidine and deoxycytidylate deaminase family. As to quaternary structure, homodimer. The cofactor is Zn(2+).

It carries out the reaction cytidine + H2O + H(+) = uridine + NH4(+). The catalysed reaction is 2'-deoxycytidine + H2O + H(+) = 2'-deoxyuridine + NH4(+). Its function is as follows. This enzyme scavenges exogenous and endogenous cytidine and 2'-deoxycytidine for UMP synthesis. This is Cytidine deaminase from Pasteurella multocida (strain Pm70).